A 723-amino-acid polypeptide reads, in one-letter code: MDSSIPDIPDDSLGLGAGGAQASSSACCAKRVNKRRAAPDFDDDDDGSKLFRCDDDGGGGDKERFARENHSEIERRRRNKMTAYITELSDMVPTCSALARKPDKLTILRMAVSHMKSLRGSGNTAADGTYKPSFLTDQELKHLILEAADGFLFVVSCESGRVVYVSDSLTPVLNQSQSDWLGSSLYDQLHPDDGDKLREQLSTAESNNTGRMLDLKTGTVKKEGQQSSVRMCMGARRSFICRMRCGSCPVEPMSMNRLNFLRSRNRNGLGPPKDGEPQYVVVHCTGYIKSWPPTGVNLTDEEADNILGSRYCLVAIGRLQVTSCPSDTDMNSISVPVEFISRHNCQGLFTFVDHRCMATVGYQPQELLGKNILELAHPEDQELLRDSFQQVVKLKGQVLSVMFRFLSKTRDWLWIRTSSFTFQNPFSEEIEYIICTNANVKQLQQQQAELGGGGRDGLYEAGQVTLPQMPVQAVTAAGTDHSKTMDKAEMHPSMYPNPDQAKFLPSTSAPGVPIYPQDNNNYTTANRSNDTYSRSVGMAPQMVQPSHSAGQVLAQMSRQNGAPPSNSSPLQGGAAVSWPGPAAGARPPFNNQQVVPQAGKALSPQFAMGSFVGGSSSSFGAMPTTAAPTPTMGANYPNINPRATLNTNGYDGLGSGQQFPSRAVEAVWPQWQGQQQAQNRAEQHPHTQNNQPDIFPDVLAMLDQPANFNNDDFEIPIYPSFNE.

The disordered stretch occupies residues 1 to 23 (MDSSIPDIPDDSLGLGAGGAQAS). The bHLH domain occupies 65–118 (FARENHSEIERRRRNKMTAYITELSDMVPTCSALARKPDKLTILRMAVSHMKSL). 2 PAS domains span residues 137–208 (DQEL…ESNN) and 325–395 (PSDT…VKLK). The 44-residue stretch at 400 to 443 (SVMFRFLSKTRDWLWIRTSSFTFQNPFSEEIEYIICTNANVKQL) folds into the PAC domain. 3 disordered regions span residues 487-509 (KAEM…STSA), 557-592 (SRQN…FNNQ), and 670-694 (QWQG…QPDI). Positions 557-570 (SRQNGAPPSNSSPL) are enriched in polar residues. Residues 670–680 (QWQGQQQAQNR) show a composition bias toward low complexity.

In terms of assembly, efficient DNA-binding requires dimerization with another bHLH protein. Heterodimer with the aryl hydrocarbon receptor (AHR). In day 23 embryos, expressed at highest levels in brain, spinal cord and epithelial cells of developing gill. Expressed at higher levels throughout all tissues in day 27 and 35 sac fry, predominantly in brain and spinal cord. In the adult, isoform 1 is widely expressed (at protein level) and is detected in liver, gill, gonad, brain, kidney, heart, spleen and muscle. Isoform 2 is expressed (at protein level) only in gills with highest expression in the epithelial cells surrounding the gill lamellae.

Its subcellular location is the nucleus. Its function is as follows. Required for activity of the AHR. Upon ligand binding, AHR translocates into the nucleus, where it heterodimerizes with ARNT and induces transcription by binding to xenobiotic response elements (XRE). Not required for the ligand-binding subunit to translocate from the cytosol to the nucleus after ligand binding. The complex initiates transcription of genes involved in the regulation of a variety of biological processes, including angiogenesis, hematopoiesis, drug and lipid metabolism, cell motility and immune modulation. The heterodimer binds to core DNA sequence 5'-TACGTG-3' within the hypoxia response element (HRE) of target gene promoters and functions as a transcriptional regulator of the adaptive response to hypoxia. The heterodimer ARNT:AHR binds to core DNA sequence 5'-TGCGTG-3' within the dioxin response element (DRE) of target gene promoters and activates their transcription. Functionally, has reduced affinity for the XRE and functions negatively in AHR-mediated signaling by disrupting the binding of dimers formed by isoform 1 and AHR to the XRE. This chain is Aryl hydrocarbon receptor nuclear translocator (arnt), found in Oncorhynchus mykiss (Rainbow trout).